Consider the following 357-residue polypeptide: Sulfate/thiosulfate import ATP-binding protein CysA (357 aa).

The region spanning 3 to 237 is the ABC transporter domain; it reads IQIQGVSKQY…PASPFVYDFL (235 aa). Residue 35 to 42 participates in ATP binding; that stretch reads GPSGSGKT.

The protein belongs to the ABC transporter superfamily. Sulfate/tungstate importer (TC 3.A.1.6) family. The complex is composed of two ATP-binding proteins (CysA), two transmembrane proteins (CysT and CysW) and a solute-binding protein (CysP).

It is found in the cell membrane. It catalyses the reaction sulfate(out) + ATP + H2O = sulfate(in) + ADP + phosphate + H(+). It carries out the reaction thiosulfate(out) + ATP + H2O = thiosulfate(in) + ADP + phosphate + H(+). In terms of biological role, part of the ABC transporter complex CysAWTP involved in sulfate/thiosulfate import. Responsible for energy coupling to the transport system. The sequence is that of Sulfate/thiosulfate import ATP-binding protein CysA from Bacillus cereus (strain ATCC 10987 / NRS 248).